A 366-amino-acid chain; its full sequence is Carbamoyl phosphate synthase small chain (366 aa).

The CPSase stretch occupies residues Met1–Asp168. L-glutamine is bound by residues Ser45, Gly220, and Gly222. Positions Arg172 to Glu363 constitute a Glutamine amidotransferase type-1 domain. The active-site Nucleophile is Cys247. Residues Leu248, Gln251, Asn289, Gly291, and Phe292 each contribute to the L-glutamine site. Residues His336 and Glu338 contribute to the active site.

The protein belongs to the CarA family. As to quaternary structure, composed of two chains; the small (or glutamine) chain promotes the hydrolysis of glutamine to ammonia, which is used by the large (or ammonia) chain to synthesize carbamoyl phosphate. Tetramer of heterodimers (alpha,beta)4.

It catalyses the reaction hydrogencarbonate + L-glutamine + 2 ATP + H2O = carbamoyl phosphate + L-glutamate + 2 ADP + phosphate + 2 H(+). It carries out the reaction L-glutamine + H2O = L-glutamate + NH4(+). It functions in the pathway amino-acid biosynthesis; L-arginine biosynthesis; carbamoyl phosphate from bicarbonate: step 1/1. It participates in pyrimidine metabolism; UMP biosynthesis via de novo pathway; (S)-dihydroorotate from bicarbonate: step 1/3. Small subunit of the glutamine-dependent carbamoyl phosphate synthetase (CPSase). CPSase catalyzes the formation of carbamoyl phosphate from the ammonia moiety of glutamine, carbonate, and phosphate donated by ATP, constituting the first step of 2 biosynthetic pathways, one leading to arginine and/or urea and the other to pyrimidine nucleotides. The small subunit (glutamine amidotransferase) binds and cleaves glutamine to supply the large subunit with the substrate ammonia. The polypeptide is Carbamoyl phosphate synthase small chain (Methanococcus maripaludis (strain C5 / ATCC BAA-1333)).